A 333-amino-acid polypeptide reads, in one-letter code: Potassium channel protein 1 (333 aa).

Residues M1–K6 are Cytoplasmic-facing. The helical transmembrane segment at I7–T27 threads the bilayer. Over V28–K60 the chain is Extracellular. The Selectivity filter signature appears at T46–D51. The helical transmembrane segment at L61–I81 threads the bilayer. At A82–E333 the chain is on the cytoplasmic side. The RCK N-terminal domain maps to N107 to I229. In terms of domain architecture, RCK C-terminal spans E246–G331.

In terms of assembly, homotetramer.

The protein resides in the cell membrane. In terms of biological role, potassium channel protein. Seems to conduct potassium at low membrane potentials. The sequence is that of Potassium channel protein 1 from Methanocaldococcus jannaschii (strain ATCC 43067 / DSM 2661 / JAL-1 / JCM 10045 / NBRC 100440) (Methanococcus jannaschii).